The following is a 450-amino-acid chain: Cell division cycle 20.5, cofactor of APC complex (450 aa).

WD repeat units lie at residues 129-166, 171-210, 214-251, 255-294, 304-346, 348-389, and 392-431; these read ADDF…TYKL, EEEG…QVRT, GHES…SIVE, GHTE…SSNP, EHTA…CLNS, ETGS…KMAE, and GHTS…PKTT.

The protein belongs to the WD repeat CDC20/Fizzy family. In terms of assembly, the APC/C is composed of at least 11 subunits that stay tightly associated throughout the cell cycle. Binds to GIG1 and PYM. Part of the mitotic checkpoint complex (MCC); interacts with MAD2 and BUB1.

The protein resides in the nucleus. Its pathway is protein modification; protein ubiquitination. Functionally, component of the anaphase promoting complex/cyclosome (APC/C), a cell cycle-regulated E3 ubiquitin-protein ligase complex that controls progression through mitosis and the G1 phase of the cell cycle. The protein is Cell division cycle 20.5, cofactor of APC complex (CDC20-5) of Arabidopsis thaliana (Mouse-ear cress).